The following is a 4743-amino-acid chain: Apolipoprotein B-100 (4743 aa).

The first 27 residues, 1-27 (MGPQRPALRAPLLLLFLLLFLDTSVWA), serve as a signal peptide directing secretion. Positions 29–113 (DATRFKHLRK…KNSEEFASAM (85 aa)) are heparin-binding. The region spanning 33-660 (FKHLRKYVYS…PSSYLPKESM (628 aa)) is the Vitellogenin domain. A disulfide bond links Cys-65 and Cys-84. A glycan (N-linked (GlcNAc...) asparagine) is linked at Asn-172. Cystine bridges form between Cys-173/Cys-199, Cys-232/Cys-248, Cys-372/Cys-377, and Cys-466/Cys-501. The tract at residues 219–293 (VRPLSTLISS…RFFRGGINQV (75 aa)) is heparin-binding. Positions 890–947 (NTNFFHESGLEARVALKAGQLKVIIPSPKRPVKLFSGSNTLHLVSTTKTEVIPPLIEN) are heparin-binding. Cys-954 and Cys-964 are oxidised to a cystine. Asn-971, Asn-1336, Asn-1345, and Asn-1491 each carry an N-linked (GlcNAc...) asparagine glycan. Position 1973 is an N6-acetyllysine (Lys-1973). Ser-2006 bears the Phosphoserine mark. Residues 2010-2145 (NDAFDEPREF…EKLSQLETYA (136 aa)) are heparin-binding. 8 N-linked (GlcNAc...) asparagine glycosylation sites follow: Asn-2094, Asn-2522, Asn-2662, Asn-2741, Asn-2791, Asn-2897, Asn-2944, and Asn-3063. A heparin-binding region spans residues 3123–3198 (FLKTTKQSFD…KIKFDKYKTE (76 aa)). Positions 3136-3146 (KAQYKKNRDKH) are basic (possible receptor binding region). Asn-3186, Asn-3299, and Asn-3321 each carry an N-linked (GlcNAc...) asparagine glycan. The LDL receptor binding stretch occupies residues 3336-3356 (VTDALQYKLEGTSRLMRKKVL). A heparin-binding region spans residues 3346 to 3479 (GTSRLMRKKV…QEYSGSVANE (134 aa)). A basic (possible receptor binding region) region spans residues 3349–3357 (RLMRKKVLK). N-linked (GlcNAc...) asparagine glycosylation is found at Asn-3428, Asn-3715, and Asn-3828. Position 3981 is a phosphoserine (Ser-3981). The residue at position 3985 (Thr-3985) is a Phosphothreonine. N-linked (GlcNAc...) asparagine glycosylation is found at Asn-4203 and Asn-4232.

As to quaternary structure, interacts with PCSK9. Interacts with MTTP. Interacts with AUP1. Interacts with CIDEB. Palmitoylated; structural requirement for proper assembly of the hydrophobic core of the lipoprotein particle. As to expression, detected in intestine and liver (at protein level).

It localises to the cytoplasm. The protein resides in the secreted. It is found in the lipid droplet. Its function is as follows. Apolipoprotein B is a major protein constituent of chylomicrons (apo B-48), LDL (apo B-100) and VLDL (apo B-100). Apo B-100 functions as a recognition signal for the cellular binding and internalization of LDL particles by the apoB/E receptor. The chain is Apolipoprotein B-100 (Apob) from Rattus norvegicus (Rat).